Here is a 496-residue protein sequence, read N- to C-terminus: Fascin (496 aa).

It belongs to the fascin family.

Its subcellular location is the cytoplasm. It localises to the cytoskeleton. In terms of biological role, acts as an actin bundling protein. This Strongylocentrotus purpuratus (Purple sea urchin) protein is Fascin.